A 392-amino-acid chain; its full sequence is HCLS1-binding protein 3 (392 aa).

Met1 carries the N-acetylmethionine modification. Ser3, Ser139, and Ser194 each carry phosphoserine. The PX domain occupies Gly19–Ala142. Disordered regions lie at residues Arg138 to Asn162, Asp174 to Leu265, and Gly319 to Glu364. A compositionally biased stretch (acidic residues) spans Asp190–Leu201. A compositionally biased stretch (basic residues) spans Arg208 to Val220. A Phosphoserine modification is found at Ser249. Residues Lys325–Ala335 show a composition bias toward pro residues. Lys337 is subject to N6-acetyllysine.

Binds HCLS1. Interacts with the SH3 domain of HCLS1 in vitro.

In terms of biological role, may be a modulator of IL-2 signaling. This Homo sapiens (Human) protein is HCLS1-binding protein 3 (HS1BP3).